The sequence spans 440 residues: Rhamnogalacturonase A (440 aa).

Positions 1 to 18 are cleaved as a signal peptide; the sequence is MRALFLLALGSIPALVSG. Cys-39 and Cys-65 form a disulfide bridge. The N-linked (GlcNAc...) asparagine glycan is linked to Asn-50. Asp-215 (proton donor) is an active-site residue. A disulfide bond links Cys-217 and Cys-234. The active site involves His-290. A glycan (N-linked (GlcNAc...) asparagine) is linked at Asn-317. Intrachain disulfides connect Cys-340/Cys-346 and Cys-368/Cys-377. O-linked (Man) threonine glycosylation is present at Thr-385. Residue Ser-386 is glycosylated (O-linked (Man) serine). 3 O-linked (Man) threonine glycosylation sites follow: Thr-388, Thr-389, and Thr-390. Ser-391 is a glycosylation site (O-linked (Man) serine). O-linked (Man) threonine glycans are attached at residues Thr-392 and Thr-394. 2 O-linked (Man) serine glycosylation sites follow: Ser-398 and Ser-401. O-linked (Man) threonine glycans are attached at residues Thr-403, Thr-404, and Thr-416. The O-linked (Man) serine glycan is linked to Ser-418. 2 O-linked (Man) threonine glycosylation sites follow: Thr-423 and Thr-426. Ser-427 and Ser-436 each carry an O-linked (Man) serine glycan.

The protein belongs to the glycosyl hydrolase 28 family. The N-terminus is blocked. Post-translationally, N-glycosylated and may also be O-glycosylated.

Its subcellular location is the secreted. It catalyses the reaction Endohydrolysis of alpha-D-GalA-(1-&gt;2)-alpha-L-Rha glycosidic bond in the rhamnogalacturonan I backbone with initial inversion of anomeric configuration releasing oligosaccharides with beta-D-GalA at the reducing end.. In terms of biological role, pectinolytic enzymes consist of four classes of enzymes: pectine lyase, polygalacturonase, pectin methylesterase and rhamnogalacturonase. Has a positive effect in the apple hot-mash liquefaction process. Hydrolyzes alpha-D-galacturonopyranosyl-(1,2)-alpha-L-rhamnopyranosyl linkages in the backbone of the hairy regions of pectins. The polypeptide is Rhamnogalacturonase A (rhgA) (Aspergillus aculeatus).